The primary structure comprises 344 residues: N-acetyl-gamma-glutamyl-phosphate reductase (344 aa).

The active site involves cysteine 149.

It belongs to the NAGSA dehydrogenase family. Type 1 subfamily.

It localises to the cytoplasm. The enzyme catalyses N-acetyl-L-glutamate 5-semialdehyde + phosphate + NADP(+) = N-acetyl-L-glutamyl 5-phosphate + NADPH + H(+). Its pathway is amino-acid biosynthesis; L-arginine biosynthesis; N(2)-acetyl-L-ornithine from L-glutamate: step 3/4. Its function is as follows. Catalyzes the NADPH-dependent reduction of N-acetyl-5-glutamyl phosphate to yield N-acetyl-L-glutamate 5-semialdehyde. This Acidithiobacillus ferrooxidans (strain ATCC 23270 / DSM 14882 / CIP 104768 / NCIMB 8455) (Ferrobacillus ferrooxidans (strain ATCC 23270)) protein is N-acetyl-gamma-glutamyl-phosphate reductase.